The chain runs to 291 residues: ATP synthase gamma chain (291 aa).

Belongs to the ATPase gamma chain family. F-type ATPases have 2 components, CF(1) - the catalytic core - and CF(0) - the membrane proton channel. CF(1) has five subunits: alpha(3), beta(3), gamma(1), delta(1), epsilon(1). CF(0) has three main subunits: a, b and c.

It is found in the cell inner membrane. In terms of biological role, produces ATP from ADP in the presence of a proton gradient across the membrane. The gamma chain is believed to be important in regulating ATPase activity and the flow of protons through the CF(0) complex. This Neisseria meningitidis serogroup B (strain ATCC BAA-335 / MC58) protein is ATP synthase gamma chain.